We begin with the raw amino-acid sequence, 567 residues long: ETHYLENE INSENSITIVE 3-like 3 protein (567 aa).

The stretch at asparagine 24–methionine 44 forms a coiled coil. 2 disordered regions span residues lysine 55–lysine 81 and isoleucine 286–leucine 393. Residues glutamate 69 to glutamine 79 show a composition bias toward basic and acidic residues. Residues serine 162 to glutamine 288 mediate DNA binding. Residues isoleucine 286–threonine 299 show a composition bias toward polar residues. Positions glutamate 300–lysine 312 are enriched in basic and acidic residues. Basic residues predominate over residues lysine 363–isoleucine 372.

The protein belongs to the EIN3 family. Interacts with MYB72.

It is found in the nucleus. In terms of biological role, probable transcription factor that may be involved in the ethylene response pathway. The polypeptide is ETHYLENE INSENSITIVE 3-like 3 protein (EIL3) (Arabidopsis thaliana (Mouse-ear cress)).